We begin with the raw amino-acid sequence, 315 residues long: Acetyl-coenzyme A carboxylase carboxyl transferase subunit alpha (315 aa).

Positions 36–289 (LSKKRLELME…RKAVAAELKI (254 aa)) constitute a CoA carboxyltransferase C-terminal domain.

Belongs to the AccA family. In terms of assembly, acetyl-CoA carboxylase is a heterohexamer composed of biotin carboxyl carrier protein (AccB), biotin carboxylase (AccC) and two subunits each of ACCase subunit alpha (AccA) and ACCase subunit beta (AccD).

It localises to the cytoplasm. It catalyses the reaction N(6)-carboxybiotinyl-L-lysyl-[protein] + acetyl-CoA = N(6)-biotinyl-L-lysyl-[protein] + malonyl-CoA. Its pathway is lipid metabolism; malonyl-CoA biosynthesis; malonyl-CoA from acetyl-CoA: step 1/1. Component of the acetyl coenzyme A carboxylase (ACC) complex. First, biotin carboxylase catalyzes the carboxylation of biotin on its carrier protein (BCCP) and then the CO(2) group is transferred by the carboxyltransferase to acetyl-CoA to form malonyl-CoA. This is Acetyl-coenzyme A carboxylase carboxyl transferase subunit alpha from Francisella tularensis subsp. holarctica (strain FTNF002-00 / FTA).